Reading from the N-terminus, the 249-residue chain is Probable WRKY transcription factor 64 (249 aa).

Positions 97–165 form a DNA-binding region, WRKY; it reads SPTPRPDDGF…YLGKHVCKAV (69 aa).

The protein belongs to the WRKY group III family.

The protein resides in the nucleus. Transcription factor. Interacts specifically with the W box (5'-(T)TGAC[CT]-3'), a frequently occurring elicitor-responsive cis-acting element. The sequence is that of Probable WRKY transcription factor 64 (WRKY64) from Arabidopsis thaliana (Mouse-ear cress).